The primary structure comprises 528 residues: U6 snRNA (guanine-N(2))-methyltransferase THUMPD2 (528 aa).

Residues 154–168 (QEVAKDHGESQEDKL) show a composition bias toward basic and acidic residues. 2 disordered regions span residues 154 to 200 (QEVA…ADAQ) and 437 to 460 (MKTL…RASS). The THUMP domain occupies 162-266 (ESQEDKLLQG…DAYSVVGIPL (105 aa)).

The protein belongs to the methyltransferase superfamily. Part of the heterodimeric THUMPD2-TRM112 methyltransferase complex; this complex forms an active tRNA methyltransferase, where TRMT112 acts as an activator of the catalytic subunit THUMPD2.

The protein localises to the nucleus. The catalysed reaction is guanosine in U6 snRNA + S-adenosyl-L-methionine = N(2)-methylguanosine in U6 snRNA + S-adenosyl-L-homocysteine + H(+). Catalytic subunit of the THUMPD2-TRM112 methyltransferase complex, that specifically mediates the S-adenosyl-L-methionine-dependent N(2)-methylation of guanosine nucleotides, most probably at position 72 (m2G72), in the U6snRNA of the major spliceosome. This modification in the U6 snRNA affects the constitutive splicing efficiency of introns that have suboptimal splice sites and can impact final mRNA levels. The chain is U6 snRNA (guanine-N(2))-methyltransferase THUMPD2 from Mus musculus (Mouse).